Reading from the N-terminus, the 705-residue chain is MKYKKLSVAVAAFAFAAVSAQNSNSLKYPETKKVNHTDTYFGNQVSDPYRWLEDDRAEDTKAWVQQEVKFTQDYLAQIPFRGQIKKQLLDIWNYEKISAPFKKGKYTYFYKNDGLQAQSVLYRKDASGKTEVFLDPNKFSDKGTTSLANLSFNKKGTLVAYSISEGGSDWNKIIILDAETKKQIDETLLDVKFSGISWLGDEGFFYSSYDKPKDGSVLSGMTDKHKVYFHKLGTKQSQDELIIGGDKFPRRYLSGYVTEDQRYLVVSAANATNGNELYIKDLKNKTDFIPIITGFESNVGLVDTDGDTLFLHTDKNAPNMRMVKTTIQNPKPETWKDVIAETSEPMRVNSGGGYFFATYMKDALSQIKQYDKTGKLVREIKLPGSGTAGGFGGEKTEKELYYSFTNYITPPTIFKFSIDSGKSEVYQKPKVKFNPENYVSEQVFYTSADGTKIPMMISNKKGLKKDGKNPTILYSYGGFNISLQPAFSVVNAIWMENGGIYAVPNIRGGGEYGKKWHDAGTKQQKKNVFNDFIAAGEYLQKNGYTSKDYMALSGRSNGGLLVGATMTMRPDLAKVAFPGVGVLDMLRYNKFTAGAGWAYDYGTAEDSKEMFEYLKSYSPVHNVKAGTCYPSTMVITSDHDDRVVPAHSFKFGAELQAKQACKNPVLIRIETNAGHGAGRSTEQVVMENADLLSFALYEMGIKNLK.

Positions 1-20 (MKYKKLSVAVAAFAFAAVSA) are cleaved as a signal peptide. Residues S556 and H675 each act as charge relay system in the active site.

It belongs to the peptidase S9A family. As to quaternary structure, monomer.

The protein localises to the periplasm. It catalyses the reaction Hydrolysis of Pro-|-Xaa &gt;&gt; Ala-|-Xaa in oligopeptides.. Functionally, cleaves peptide bonds on the C-terminal side of prolyl residues within peptides that are up to approximately 30 amino acids long. Has an absolute requirement for an X-Pro bond in the trans configuration immediately preceding the Pro-Y scissible bond. The chain is Prolyl endopeptidase from Elizabethkingia miricola (Chryseobacterium miricola).